Reading from the N-terminus, the 354-residue chain is Probable L-ascorbate-6-phosphate lactonase UlaG (354 aa).

The protein belongs to the UlaG family. A divalent metal cation is required as a cofactor.

It is found in the cytoplasm. It carries out the reaction L-ascorbate 6-phosphate + H2O = 3-dehydro-L-gulonate 6-phosphate. Its pathway is cofactor degradation; L-ascorbate degradation; D-xylulose 5-phosphate from L-ascorbate: step 1/4. In terms of biological role, probably catalyzes the hydrolysis of L-ascorbate-6-P into 3-keto-L-gulonate-6-P. Is essential for L-ascorbate utilization under anaerobic conditions. The protein is Probable L-ascorbate-6-phosphate lactonase UlaG of Salmonella heidelberg (strain SL476).